The primary structure comprises 213 residues: Phosphoenolpyruvate guanylyltransferase (213 aa).

Residues T146, G161, and S164 each coordinate phosphoenolpyruvate.

This sequence belongs to the CofC family.

It carries out the reaction phosphoenolpyruvate + GTP + H(+) = enolpyruvoyl-2-diphospho-5'-guanosine + diphosphate. It participates in cofactor biosynthesis; coenzyme F420 biosynthesis. Its function is as follows. Guanylyltransferase that catalyzes the activation of phosphoenolpyruvate (PEP) as enolpyruvoyl-2-diphospho-5'-guanosine, via the condensation of PEP with GTP. It is involved in the biosynthesis of coenzyme F420, a hydride carrier cofactor. This is Phosphoenolpyruvate guanylyltransferase from Mycolicibacterium vanbaalenii (strain DSM 7251 / JCM 13017 / BCRC 16820 / KCTC 9966 / NRRL B-24157 / PYR-1) (Mycobacterium vanbaalenii).